The sequence spans 320 residues: L-lactate dehydrogenase (320 aa).

NAD(+) contacts are provided by residues valine 18, aspartate 39, arginine 44, tyrosine 69, and 83 to 84 (GA). Residues glutamine 86 and arginine 92 each coordinate substrate. Residues threonine 105, 122 to 124 (AAN), and serine 147 each bind NAD(+). Position 124-127 (124-127 (NPVD)) interacts with substrate. 152–155 (DSAR) provides a ligand contact to substrate. The Proton acceptor role is filled by histidine 179. Tyrosine 223 carries the phosphotyrosine modification. Threonine 232 is a substrate binding site.

The protein belongs to the LDH/MDH superfamily. LDH family. In terms of assembly, homotetramer.

It is found in the cytoplasm. It carries out the reaction (S)-lactate + NAD(+) = pyruvate + NADH + H(+). It participates in fermentation; pyruvate fermentation to lactate; (S)-lactate from pyruvate: step 1/1. Catalyzes the conversion of lactate to pyruvate. The chain is L-lactate dehydrogenase from Pediococcus pentosaceus (strain ATCC 25745 / CCUG 21536 / LMG 10740 / 183-1w).